The chain runs to 514 residues: Sugar transport protein 3 (514 aa).

Over 1 to 19 the chain is Cytoplasmic; sequence MVAEEARKEAMAKSVSGGK. 12 helical membrane-spanning segments follow: residues 20-40, 87-107, 124-144, 147-167, 174-194, 207-227, 289-309, 327-347, 356-376, 392-412, 430-450, and 456-476; these read ITYF…IFGY, LLTS…LLAS, VSFL…MLII, LLLG…LSEM, GAIS…ANVI, ISLA…LFLP, LVMA…VVAF, MSTL…MLVV, FLIG…IVMV, VVVL…PLGW, VTVA…PPML, and GIFF…QLFL. The Cytoplasmic segment spans residues 477–514; that stretch reads PETKNVPIEKVVGLWEKHWFWRRMTSKRDIQETTILSH.

It belongs to the major facilitator superfamily. Sugar transporter (TC 2.A.1.1) family.

The protein localises to the membrane. Functionally, mediates an active uptake of hexoses, probably by sugar/hydrogen symport. The protein is Sugar transport protein 3 (STP3) of Arabidopsis thaliana (Mouse-ear cress).